We begin with the raw amino-acid sequence, 258 residues long: Acyl-[acyl-carrier-protein]--UDP-N-acetylglucosamine O-acyltransferase (258 aa).

The protein belongs to the transferase hexapeptide repeat family. LpxA subfamily. In terms of assembly, homotrimer.

The protein resides in the cytoplasm. It carries out the reaction a (3R)-hydroxyacyl-[ACP] + UDP-N-acetyl-alpha-D-glucosamine = a UDP-3-O-[(3R)-3-hydroxyacyl]-N-acetyl-alpha-D-glucosamine + holo-[ACP]. It functions in the pathway glycolipid biosynthesis; lipid IV(A) biosynthesis; lipid IV(A) from (3R)-3-hydroxytetradecanoyl-[acyl-carrier-protein] and UDP-N-acetyl-alpha-D-glucosamine: step 1/6. Functionally, involved in the biosynthesis of lipid A, a phosphorylated glycolipid that anchors the lipopolysaccharide to the outer membrane of the cell. This Pseudomonas fluorescens (strain SBW25) protein is Acyl-[acyl-carrier-protein]--UDP-N-acetylglucosamine O-acyltransferase.